We begin with the raw amino-acid sequence, 886 residues long: Putative leucine-rich repeat receptor-like serine/threonine-protein kinase At2g14440 (886 aa).

Positions 1 to 23 are cleaved as a signal peptide; the sequence is METRSKLMLLACATFSIISLVKS. Residues 24–528 are Extracellular-facing; the sequence is QNQQGFISLY…KHQPKSWLVA (505 aa). N49, N69, N232, N236, N259, N292, N434, N447, N458, and N471 each carry an N-linked (GlcNAc...) asparagine glycan. LRR repeat units lie at residues 413–436, 437–460, 461–483, and 485–507; these read RIISLDLSSSGLTGVITPSIQNLT, MLRELDLSNNNLTGVIPPSLQNLT, MLRELDLSNNNLTGEVPEFLATI, and PLLVIHLRGNNLRGSVPQALQDR. The helical transmembrane segment at 529–549 threads the bilayer; that stretch reads IVASISCVAVTIIVLVLIFIF. Topologically, residues 550-886 are cytoplasmic; that stretch reads RRRKSSTRKV…TFISDIPSAR (337 aa). Positions 581-850 constitute a Protein kinase domain; it reads NNFEVVLGKG…NMTRVAHELN (270 aa). ATP is bound by residues 587-595 and K608; that span reads LGKGGFGVV. Y653 carries the post-translational modification Phosphotyrosine. D705 functions as the Proton acceptor in the catalytic mechanism. S739 is subject to Phosphoserine. T740 and T745 each carry phosphothreonine. Y753 is subject to Phosphotyrosine. The tract at residues 863–886 is disordered; it reads SQDQNSSKSSGHTVTFISDIPSAR. Polar residues predominate over residues 865-878; it reads DQNSSKSSGHTVTF.

The protein belongs to the protein kinase superfamily. Ser/Thr protein kinase family.

Its subcellular location is the cell membrane. The enzyme catalyses L-seryl-[protein] + ATP = O-phospho-L-seryl-[protein] + ADP + H(+). It catalyses the reaction L-threonyl-[protein] + ATP = O-phospho-L-threonyl-[protein] + ADP + H(+). This Arabidopsis thaliana (Mouse-ear cress) protein is Putative leucine-rich repeat receptor-like serine/threonine-protein kinase At2g14440.